The chain runs to 492 residues: Bifunctional protein GlmU (492 aa).

A pyrophosphorylase region spans residues M1–R241. UDP-N-acetyl-alpha-D-glucosamine contacts are provided by residues L12–G15, K26, Q83, and G88–T89. D114 is a Mg(2+) binding site. G151, E166, N181, and N239 together coordinate UDP-N-acetyl-alpha-D-glucosamine. N239 is a binding site for Mg(2+). The interval V242 to A262 is linker. An N-acetyltransferase region spans residues G263 to P492. UDP-N-acetyl-alpha-D-glucosamine contacts are provided by R344 and K362. The active-site Proton acceptor is H374. Positions 377 and 388 each coordinate UDP-N-acetyl-alpha-D-glucosamine. Residues A391, N397–Y398, and A434 each bind acetyl-CoA. A disordered region spans residues P443–P492.

In the N-terminal section; belongs to the N-acetylglucosamine-1-phosphate uridyltransferase family. The protein in the C-terminal section; belongs to the transferase hexapeptide repeat family. Homotrimer. Mg(2+) serves as cofactor.

Its subcellular location is the cytoplasm. It carries out the reaction alpha-D-glucosamine 1-phosphate + acetyl-CoA = N-acetyl-alpha-D-glucosamine 1-phosphate + CoA + H(+). The enzyme catalyses N-acetyl-alpha-D-glucosamine 1-phosphate + UTP + H(+) = UDP-N-acetyl-alpha-D-glucosamine + diphosphate. The protein operates within nucleotide-sugar biosynthesis; UDP-N-acetyl-alpha-D-glucosamine biosynthesis; N-acetyl-alpha-D-glucosamine 1-phosphate from alpha-D-glucosamine 6-phosphate (route II): step 2/2. Its pathway is nucleotide-sugar biosynthesis; UDP-N-acetyl-alpha-D-glucosamine biosynthesis; UDP-N-acetyl-alpha-D-glucosamine from N-acetyl-alpha-D-glucosamine 1-phosphate: step 1/1. It participates in bacterial outer membrane biogenesis; LPS lipid A biosynthesis. Functionally, catalyzes the last two sequential reactions in the de novo biosynthetic pathway for UDP-N-acetylglucosamine (UDP-GlcNAc). The C-terminal domain catalyzes the transfer of acetyl group from acetyl coenzyme A to glucosamine-1-phosphate (GlcN-1-P) to produce N-acetylglucosamine-1-phosphate (GlcNAc-1-P), which is converted into UDP-GlcNAc by the transfer of uridine 5-monophosphate (from uridine 5-triphosphate), a reaction catalyzed by the N-terminal domain. The protein is Bifunctional protein GlmU of Mycobacterium ulcerans (strain Agy99).